A 361-amino-acid chain; its full sequence is MADRKFNFCAGPSALPTEVLLQAQAELLDWRGKGLSIMEMSHRSDDFVAVAVEAERDFRELMSVPDNYKVLFVQGGAATQFASVPLNLLKLGAEADYIDTGIWSKKAIAEAGRYLKVNVAASAKDNGYACIPARSEWRLSESAGYVHYTPNETIGGVEFLDIPDVGDKPLVADMSSTILSRPVDISRFGVIYAGAQKNIGPAGLTLVIVREDLLGYASDSLPTMLNYKVASENDSMVNTPPTFSWYLAGLVFKWLKGKGGVQAMEAINCRKADKLYSYIDDSEFYANPIDLSCRSWMNVPFTLKDDRLDQKFLQEAEGAGLLNLQGHRSVGGMRASLYNALPEEAVDALIGFMQDFAGRNA.

An L-glutamate-binding site is contributed by R43. The pyridoxal 5'-phosphate site is built by W103, T153, D173, and Q196. At K197 the chain carries N6-(pyridoxal phosphate)lysine. 238–239 contacts pyridoxal 5'-phosphate; it reads NT.

It belongs to the class-V pyridoxal-phosphate-dependent aminotransferase family. SerC subfamily. Homodimer. Requires pyridoxal 5'-phosphate as cofactor.

Its subcellular location is the cytoplasm. The catalysed reaction is O-phospho-L-serine + 2-oxoglutarate = 3-phosphooxypyruvate + L-glutamate. The enzyme catalyses 4-(phosphooxy)-L-threonine + 2-oxoglutarate = (R)-3-hydroxy-2-oxo-4-phosphooxybutanoate + L-glutamate. The protein operates within amino-acid biosynthesis; L-serine biosynthesis; L-serine from 3-phospho-D-glycerate: step 2/3. Its pathway is cofactor biosynthesis; pyridoxine 5'-phosphate biosynthesis; pyridoxine 5'-phosphate from D-erythrose 4-phosphate: step 3/5. In terms of biological role, catalyzes the reversible conversion of 3-phosphohydroxypyruvate to phosphoserine and of 3-hydroxy-2-oxo-4-phosphonooxybutanoate to phosphohydroxythreonine. The protein is Phosphoserine aminotransferase of Hahella chejuensis (strain KCTC 2396).